Here is a 250-residue protein sequence, read N- to C-terminus: Small ribosomal subunit protein uS2 (250 aa).

It belongs to the universal ribosomal protein uS2 family.

The sequence is that of Small ribosomal subunit protein uS2 from Albidiferax ferrireducens (strain ATCC BAA-621 / DSM 15236 / T118) (Rhodoferax ferrireducens).